The following is a 977-amino-acid chain: Receptor protein-tyrosine kinase CEPR2 (977 aa).

An N-terminal signal peptide occupies residues 1 to 31 (MSRRPDLLRGSVVATVAATFLLFIFPPNVES). At 32-620 (TVEKQALFRF…NVKRNSSLDG (589 aa)) the chain is on the extracellular side. The N-linked (GlcNAc...) asparagine glycan is linked to asparagine 85. 20 LRR repeats span residues 97-121 (LTKL…IVNC), 122-146 (KNLK…PLKS), 148-167 (EILD…WIGN), 168-192 (MNQL…SIGG), 193-217 (LKKL…IFDL), 219-241 (ALDT…ISRL), 242-265 (VNLT…IKNL), 266-288 (TRLR…ELGV), 290-312 (KELR…GFGD), 313-338 (LSHL…GRFS), 340-361 (LDTV…LCQN), 363-385 (KLQF…YGEC), 386-409 (KSLL…FWSL), 411-433 (LAKM…IGLS), 434-457 (TELS…LGRL), 458-481 (TNIE…VGDL), 482-504 (KELS…ELKN), 506-529 (VKLV…LSQI), 530-553 (ASLN…LVKL), and 555-576 (LSFI…LLAV). N-linked (GlcNAc...) asparagine glycosylation is present at asparagine 128. N-linked (GlcNAc...) asparagine glycosylation occurs at asparagine 205. Asparagine 243, asparagine 251, and asparagine 264 each carry an N-linked (GlcNAc...) asparagine glycan. Asparagine 301 and asparagine 325 each carry an N-linked (GlcNAc...) asparagine glycan. Asparagine 469 and asparagine 491 each carry an N-linked (GlcNAc...) asparagine glycan. A glycan (N-linked (GlcNAc...) asparagine) is linked at asparagine 615. Residues 621 to 641 (TLLFLALAIVVVVLVSGLFAL) form a helical membrane-spanning segment. Topologically, residues 642 to 977 (RYRVVKIREL…SQDTTGKITV (336 aa)) are cytoplasmic. The region spanning 683–965 (LDEDHVIGSG…RKLDDADPCV (283 aa)) is the Protein kinase domain. ATP-binding positions include 689-697 (IGSGSAGKV) and lysine 712. Tyrosine 801 carries the phosphotyrosine modification. Aspartate 814 acts as the Proton acceptor in catalysis. Residue serine 846 is modified to Phosphoserine. A phosphotyrosine mark is found at tyrosine 854 and tyrosine 861.

Belongs to the protein kinase superfamily. Ser/Thr protein kinase family. Interacts with the root-derived peptide CEP1. Binds to the ammonium transporter AMT1-1. Expressed in mature leaves, primary roots, and the root tips of both primary and lateral roots.

It is found in the cell membrane. It catalyses the reaction L-tyrosyl-[protein] + ATP = O-phospho-L-tyrosyl-[protein] + ADP + H(+). Receptor kinase involved in the perception of C-terminally encoded plant signaling peptide (CEP) and subsequent regulation of root and shoot development. Together with CEPR1, mediates systemic nitrogen (N)-demand signaling upon the perception of root-derived peptides (e.g. CEP1) via the up-regulation of genes involved in N uptake and assimilation pathways. In Arabidopsis thaliana (Mouse-ear cress), this protein is Receptor protein-tyrosine kinase CEPR2.